The following is a 375-amino-acid chain: Probable peptidoglycan glycosyltransferase FtsW (375 aa).

The Cytoplasmic portion of the chain corresponds to 1–16 (MNLNFKLNLKEIERYD). A helical transmembrane segment spans residues 17-37 (LVILLMAVALTCFGVVMVYSA). Residues 38–49 (SSVMATKKFHDG) lie on the Periplasmic side of the membrane. Residues 50 to 70 (FYFLKRQGIYAILGCAAMIVA) traverse the membrane as a helical segment. Over 71 to 81 (MRIDYRQWREY) the chain is Cytoplasmic. A helical transmembrane segment spans residues 82–102 (AVPILLGCLLLLLLVFIPGIG). Topologically, residues 103–145 (GAAKGASRWIRFPGFNLQPSELAKIALIMYMAYSLDKKQEKVK) are periplasmic. A helical transmembrane segment spans residues 146-166 (FFSTGFAPYMVLLAILLAILL). At 167 to 169 (KQH) the chain is on the cytoplasmic side. A helical membrane pass occupies residues 170-190 (DLGSALTMGGVAILMLFAAGT). The Periplasmic portion of the chain corresponds to 191–193 (RPR). The chain crosses the membrane as a helical span at residues 194–214 (YILGMVVLTLPFLYFLVMNVD). At 215-233 (YRRRRILAYLNPWEDPTNT) the chain is on the cytoplasmic side. A helical transmembrane segment spans residues 234–254 (GFQIIQSWLAFGNGGIIGQGL). Over 255–279 (GEGKQKMFFLPEAHTDFILSVVGEE) the chain is Periplasmic. A helical transmembrane segment spans residues 280–300 (LGLIGVIVIAAMFLMLVLRGV). Residues 301–312 (RVALMAQDPFGR) lie on the Cytoplasmic side of the membrane. A helical membrane pass occupies residues 313–333 (FLAFGIVTLLGIQAFVNMGVV). At 334-343 (TGLLPTKGLA) the chain is on the periplasmic side. The chain crosses the membrane as a helical span at residues 344-364 (LPFISYGGSSLIVTLFAVGIL). Residues 365-375 (LNVSTRMKGTP) are Cytoplasmic-facing.

Belongs to the SEDS family. FtsW subfamily.

The protein localises to the cell inner membrane. It carries out the reaction [GlcNAc-(1-&gt;4)-Mur2Ac(oyl-L-Ala-gamma-D-Glu-L-Lys-D-Ala-D-Ala)](n)-di-trans,octa-cis-undecaprenyl diphosphate + beta-D-GlcNAc-(1-&gt;4)-Mur2Ac(oyl-L-Ala-gamma-D-Glu-L-Lys-D-Ala-D-Ala)-di-trans,octa-cis-undecaprenyl diphosphate = [GlcNAc-(1-&gt;4)-Mur2Ac(oyl-L-Ala-gamma-D-Glu-L-Lys-D-Ala-D-Ala)](n+1)-di-trans,octa-cis-undecaprenyl diphosphate + di-trans,octa-cis-undecaprenyl diphosphate + H(+). Its pathway is cell wall biogenesis; peptidoglycan biosynthesis. Functionally, peptidoglycan polymerase that is essential for cell division. The chain is Probable peptidoglycan glycosyltransferase FtsW from Geobacter metallireducens (strain ATCC 53774 / DSM 7210 / GS-15).